The sequence spans 84 residues: Small ribosomal subunit protein uS17 (84 aa).

Belongs to the universal ribosomal protein uS17 family. Part of the 30S ribosomal subunit.

In terms of biological role, one of the primary rRNA binding proteins, it binds specifically to the 5'-end of 16S ribosomal RNA. This is Small ribosomal subunit protein uS17 from Porphyromonas gingivalis (strain ATCC 33277 / DSM 20709 / CIP 103683 / JCM 12257 / NCTC 11834 / 2561).